A 251-amino-acid polypeptide reads, in one-letter code: Geranylgeranylglyceryl phosphate synthase (251 aa).

2 residues coordinate Mg(2+): Asp-25 and Ser-54. Residues 173–179, 204–205, and 226–227 contribute to the sn-glycerol 1-phosphate site; these read YLEAGSG, GG, and GT.

The protein belongs to the GGGP/HepGP synthase family. Group II subfamily. The cofactor is Mg(2+).

The protein localises to the cytoplasm. The catalysed reaction is sn-glycerol 1-phosphate + (2E,6E,10E)-geranylgeranyl diphosphate = sn-3-O-(geranylgeranyl)glycerol 1-phosphate + diphosphate. Its pathway is membrane lipid metabolism; glycerophospholipid metabolism. Its function is as follows. Prenyltransferase that catalyzes the transfer of the geranylgeranyl moiety of geranylgeranyl diphosphate (GGPP) to the C3 hydroxyl of sn-glycerol-1-phosphate (G1P). This reaction is the first ether-bond-formation step in the biosynthesis of archaeal membrane lipids. This Pyrococcus furiosus (strain ATCC 43587 / DSM 3638 / JCM 8422 / Vc1) protein is Geranylgeranylglyceryl phosphate synthase.